Reading from the N-terminus, the 59-residue chain is Alpha-like toxin CsEv5 (59 aa).

One can recognise an LCN-type CS-alpha/beta domain in the interval 1 to 59 (KDGYPVDSKGCKLSCVANNYCDNQCKMKKASGGHCYAMSCYCEGLPENAKVSDSATNIC). 4 disulfide bridges follow: C11–C59, C15–C35, C21–C40, and C25–C42.

It belongs to the long (4 C-C) scorpion toxin superfamily. Sodium channel inhibitor family. Expressed by the venom gland.

It is found in the secreted. Binds voltage-independently sodium channels (Nav) and inhibits the inactivation of the activated channels, thereby blocking neuronal transmission. Is highly toxic to insects and barely toxic to mammals. As it does not compete with the classical alpha-toxin AaH2, this toxin is considered as an alpha-like toxin. The protein is Alpha-like toxin CsEv5 of Centruroides sculpturatus (Arizona bark scorpion).